The following is a 371-amino-acid chain: 4-hydroxy-3-methylbut-2-en-1-yl diphosphate synthase (flavodoxin) (371 aa).

4 residues coordinate [4Fe-4S] cluster: Cys-270, Cys-273, Cys-305, and Glu-312.

It belongs to the IspG family. Requires [4Fe-4S] cluster as cofactor.

It carries out the reaction (2E)-4-hydroxy-3-methylbut-2-enyl diphosphate + oxidized [flavodoxin] + H2O + 2 H(+) = 2-C-methyl-D-erythritol 2,4-cyclic diphosphate + reduced [flavodoxin]. The protein operates within isoprenoid biosynthesis; isopentenyl diphosphate biosynthesis via DXP pathway; isopentenyl diphosphate from 1-deoxy-D-xylulose 5-phosphate: step 5/6. Converts 2C-methyl-D-erythritol 2,4-cyclodiphosphate (ME-2,4cPP) into 1-hydroxy-2-methyl-2-(E)-butenyl 4-diphosphate. In Shewanella loihica (strain ATCC BAA-1088 / PV-4), this protein is 4-hydroxy-3-methylbut-2-en-1-yl diphosphate synthase (flavodoxin).